We begin with the raw amino-acid sequence, 459 residues long: Aluminum-activated malate transporter 1 (459 aa).

The Extracellular portion of the chain corresponds to 1–52 (MDIDHGRESDGEMVGTIASCGLLLHSLLAGLGRRAAGFARKVGGAAREDPRR). Transmembrane regions (helical) follow at residues 53 to 73 (VAHSLKVGLALALVSVVYFVT) and 74 to 94 (PLFNGLGVSAIWAVLTVVVVM). At 95-108 (EYTVGATLSKGLNR) the chain is on the extracellular side. A helical transmembrane segment spans residues 109 to 129 (ALATLVAGCIAVGAHQLAELA). The Cytoplasmic segment spans residues 130–137 (ERCGDQGE). Residues 138–158 (PIVLTVLVFFVASAATFLRFI) form a helical membrane-spanning segment. At 159–160 (PE) the chain is on the extracellular side. The helical transmembrane segment at 161 to 181 (IKAKYDYGVTIFILTFGLVAV) threads the bilayer. The Cytoplasmic portion of the chain corresponds to 182–199 (SSYRVEELIQLAHQRFYT). A helical membrane pass occupies residues 200 to 220 (IAVGVFICLCTTVFLFPVWAG). The Extracellular segment spans residues 221-459 (EDVHKLASGN…DEPLPDVVIL (239 aa)).

It belongs to the aromatic acid exporter (TC 2.A.85) family. Detected in root tips.

It localises to the cell membrane. Its activity is regulated as follows. Activated by external aluminum. The enhancement of malate transport is not due to alteration in the selectivity properties but is due to an increased anion permeability. Functionally, malate transporter critical for aluminum tolerance. Permeable to chloride, nitrate, sulfate and malate. The polypeptide is Aluminum-activated malate transporter 1 (ALMT1) (Triticum aestivum (Wheat)).